The sequence spans 488 residues: Beta-xylosidase (488 aa).

E163 functions as the Proton donor in the catalytic mechanism. E275 functions as the Nucleophile in the catalytic mechanism.

This sequence belongs to the glycosyl hydrolase 39 family.

The enzyme catalyses Hydrolysis of (1-&gt;4)-beta-D-xylans, to remove successive D-xylose residues from the non-reducing termini.. Beta-xylosidase is an intracellular xylan-degrading enzyme. This is Beta-xylosidase (xynB) from Caldicellulosiruptor saccharolyticus (Caldocellum saccharolyticum).